The following is a 228-amino-acid chain: Ribose-5-phosphate isomerase A (228 aa).

Substrate-binding positions include 26-29 (SGST), 81-84 (DGAD), and 94-97 (KGGG). Glu103 functions as the Proton acceptor in the catalytic mechanism. Lys121 contributes to the substrate binding site.

It belongs to the ribose 5-phosphate isomerase family. Homodimer.

The catalysed reaction is aldehydo-D-ribose 5-phosphate = D-ribulose 5-phosphate. It functions in the pathway carbohydrate degradation; pentose phosphate pathway; D-ribose 5-phosphate from D-ribulose 5-phosphate (non-oxidative stage): step 1/1. Catalyzes the reversible conversion of ribose-5-phosphate to ribulose 5-phosphate. The protein is Ribose-5-phosphate isomerase A of Shouchella clausii (strain KSM-K16) (Alkalihalobacillus clausii).